The sequence spans 738 residues: MAADSREEKDGELNVLDDILTEVPEQDDELYNPESEQDKNEKKGSKRKSERMESIDTKRQKPSIHSRQLISKPLSSSVSNNKRIVSTKGKSVTEYKNEEYQRSERNKRLDADRKIRLSSSSSREPYKSQPEKPCLRKRDSERRAKSPTPDGSERIGLEVDRRASRSSQSSKEEGNSEEYGSDHETGSSASSEQGNNTENEEEGGEEDVEEDEEVDEDGDDDEEVDEDAEEEEDEEEDEEEEDEEEEEEEEEEYEQDERDQKEEGNDYDTRSEASDSGSESVSFTDGSVRSGSGTDGSDEKKKERKRARGISPIVFDRSGSSASESYAGSEKKHEKLSSSVRAVRKDQTSKLKYVLQDARFFLIKSNNHENVSLAKAKGVWSTLPVNEKKLNLAFRSARSVILIFSVRESGKFQGFARLSSESHHGGSPIHWVLPAGMSAKMLGGVFKIDWICRRELPFTKSAHLTNPWNEHKPVKIGRDGQEIELECGTQLCLLFPPDESIDLYQLIHKMRHKRRMHSQPRSRGRPSRREPVRDVGRRRPEDYDIHNSRKKPRIDYPPEFHQRPGYLKDPRYQEVDSFTNLIPNRRFSGVRRDVFLNGSYNDYVREFHNMGPPPPWQGMPPYPGIEQPPHHPYYQHHAPPPQAHPPYSGHHPVPHEARYRDKRVHDYDMRVDDFLRRTQAVVSGRRSRPRERDRERERDRPRDNRRDRERDRGRDRERERERICDRDRDRGERGRYRR.

The segment covering 1 to 12 has biased composition (basic and acidic residues); sequence MAADSREEKDGE. Residues 1-341 are disordered; sequence MAADSREEKD…KHEKLSSSVR (341 aa). S35 carries the phosphoserine modification. Residues 50-59 are compositionally biased toward basic and acidic residues; it reads ERMESIDTKR. Residues 63–90 show a composition bias toward polar residues; sequence SIHSRQLISKPLSSSVSNNKRIVSTKGK. Positions 91–115 are enriched in basic and acidic residues; it reads SVTEYKNEEYQRSERNKRLDADRKI. K96 participates in a covalent cross-link: Glycyl lysine isopeptide (Lys-Gly) (interchain with G-Cter in SUMO2). Phosphoserine occurs at positions 118 and 120. The segment covering 124 to 144 has biased composition (basic and acidic residues); sequence EPYKSQPEKPCLRKRDSERRA. The residue at position 146 (S146) is a Phosphoserine. T148 is subject to Phosphothreonine. Composition is skewed to basic and acidic residues over residues 151–163 and 170–185; these read GSER…DRRA and SKEE…DHET. Polar residues predominate over residues 186–197; sequence GSSASSEQGNNT. The segment covering 198-257 has biased composition (acidic residues); that stretch reads ENEEEGGEEDVEEDEEVDEDGDDDEEVDEDAEEEEDEEEDEEEEDEEEEEEEEEEYEQDE. Basic and acidic residues predominate over residues 258–273; that stretch reads RDQKEEGNDYDTRSEA. Over residues 283–292 the composition is skewed to polar residues; the sequence is FTDGSVRSGS. Phosphoserine is present on residues S311, S318, S320, S321, and S323. Residues 318–328 show a composition bias toward low complexity; it reads SGSSASESYAG. The region spanning 358 to 495 is the YTH domain; that stretch reads ARFFLIKSNN…ECGTQLCLLF (138 aa). Residues 364 to 366 and W380 each bind RNA; that span reads KSN. S427 is subject to Phosphoserine. W431 is an RNA binding site. S438 carries the phosphoserine modification. D479 is a binding site for RNA. A compositionally biased stretch (basic residues) spans 512 to 526; it reads HKRRMHSQPRSRGRP. Disordered stretches follow at residues 512–566, 618–654, and 680–738; these read HKRR…RPGY, GMPP…HPVP, and AVVS…RYRR. Residues 527–566 show a composition bias toward basic and acidic residues; the sequence is SRREPVRDVGRRRPEDYDIHNSRKKPRIDYPPEFHQRPGY. Residue S548 is modified to Phosphoserine. The segment covering 690-738 has biased composition (basic and acidic residues); sequence RERDRERERDRPRDNRRDRERDRGRDRERERERICDRDRDRGERGRYRR.

In terms of assembly, interacts with SRSF1. Interacts with SRSF2. Interacts with SRSF3. Interacts with SRSF7. Interacts with SRSF10. Interacts with CPSF6. Interacts with KHDRBS1/SAM68. Interacts with TRA2B. Interacts with KHDRBS3. Interacts with EMD. Interacts with RBMX. Interacts with ZCCHC8. Tyrosine phosphorylated. In terms of tissue distribution, ubiquitous.

It localises to the nucleus. The protein resides in the nucleus speckle. Regulator of alternative splicing that specifically recognizes and binds N6-methyladenosine (m6A)-containing RNAs. M6A is a modification present at internal sites of mRNAs and some non-coding RNAs and plays a role in the efficiency of mRNA splicing, processing and stability. Acts as a key regulator of exon-inclusion or exon-skipping during alternative splicing via interaction with mRNA splicing factors SRSF3 and SRSF10. Specifically binds m6A-containing mRNAs and promotes recruitment of SRSF3 to its mRNA-binding elements adjacent to m6A sites, leading to exon-inclusion during alternative splicing. In contrast, interaction with SRSF3 prevents interaction with SRSF10, a splicing factor that promotes exon skipping: this prevents SRSF10 from binding to its mRNA-binding sites close to m6A-containing regions, leading to inhibit exon skipping during alternative splicing. May also regulate alternative splice site selection. Also involved in nuclear export of m6A-containing mRNAs via interaction with SRSF3: interaction with SRSF3 facilitates m6A-containing mRNA-binding to both SRSF3 and NXF1, promoting mRNA nuclear export. Involved in S-adenosyl-L-methionine homeostasis by regulating expression of MAT2A transcripts, probably by binding m6A-containing MAT2A mRNAs. Also recognizes and binds m6A on other RNA molecules. Involved in random X inactivation mediated by Xist RNA: recognizes and binds m6A-containing Xist and promotes transcription repression activity of Xist. Also recognizes and binds m6A-containing single-stranded DNA. Involved in germline development: required for spermatogonial development in males and oocyte growth and maturation in females, probably via its role in alternative splicing. This is YTH domain-containing protein 1 (Ythdc1) from Rattus norvegicus (Rat).